We begin with the raw amino-acid sequence, 404 residues long: Glucose-1-phosphate adenylyltransferase 2 (404 aa).

Alpha-D-glucose 1-phosphate is bound by residues Y97, G162, E177–K178, and S195.

The protein belongs to the bacterial/plant glucose-1-phosphate adenylyltransferase family. As to quaternary structure, homotetramer.

It carries out the reaction alpha-D-glucose 1-phosphate + ATP + H(+) = ADP-alpha-D-glucose + diphosphate. The protein operates within glycan biosynthesis; glycogen biosynthesis. Involved in the biosynthesis of ADP-glucose, a building block required for the elongation reactions to produce glycogen. Catalyzes the reaction between ATP and alpha-D-glucose 1-phosphate (G1P) to produce pyrophosphate and ADP-Glc. The sequence is that of Glucose-1-phosphate adenylyltransferase 2 from Vibrio vulnificus (strain YJ016).